Here is a 226-residue protein sequence, read N- to C-terminus: MVKPPAGGNDGGRAKPARLKTAFGRTPSQQAWLERQINDPFSAKARALGYRSRAAFKISEIDDKYRFFKKGAKVIDLGCAPGGWLQMATERGVTDIVGVDLLPVDPVAPAHILEMDFTDPACPPKMLELLGGAPDLVMSDMAPNTVGHRETDHLRIVGLIEIGADFAIEVLKPGGAFVAKAFQGGETAAVIAQLKKHFTKVVHFKPKASRSDSSEVFLVATGFKGR.

S-adenosyl-L-methionine-binding residues include glycine 82, tryptophan 84, aspartate 100, aspartate 116, and aspartate 140. The active-site Proton acceptor is the lysine 180.

This sequence belongs to the class I-like SAM-binding methyltransferase superfamily. RNA methyltransferase RlmE family.

The protein localises to the cytoplasm. The enzyme catalyses uridine(2552) in 23S rRNA + S-adenosyl-L-methionine = 2'-O-methyluridine(2552) in 23S rRNA + S-adenosyl-L-homocysteine + H(+). Functionally, specifically methylates the uridine in position 2552 of 23S rRNA at the 2'-O position of the ribose in the fully assembled 50S ribosomal subunit. The polypeptide is Ribosomal RNA large subunit methyltransferase E (Caulobacter sp. (strain K31)).